Here is a 717-residue protein sequence, read N- to C-terminus: Eukaryotic translation initiation factor 3 subunit B (717 aa).

Residues 1–89 (MTVEDNLDID…VFIEYETGEM (89 aa)) form a sufficient for interaction with HCR1 and TIF32 region. Residues 1–216 (MTVEDNLDID…GVQLWGGPDW (216 aa)) form a sufficient for interaction with PIC8 region. The region spanning 28–115 (SFIVVDGAPV…HKLLVNKLSE (88 aa)) is the RRM domain. WD repeat units follow at residues 183-221 (RERW…PPIC), 223-284 (FQHP…PVRT), 293-332 (GASM…LLDK), 445-484 (ELKD…NRHT), 506-549 (FDKK…DRKH), and 564-609 (SEHY…QREE).

This sequence belongs to the eIF-3 subunit B family. In terms of assembly, component of the eukaryotic translation initiation factor 3 (eIF-3) complex.

The protein localises to the cytoplasm. RNA-binding component of the eukaryotic translation initiation factor 3 (eIF-3) complex, which is involved in protein synthesis of a specialized repertoire of mRNAs and, together with other initiation factors, stimulates binding of mRNA and methionyl-tRNAi to the 40S ribosome. The eIF-3 complex specifically targets and initiates translation of a subset of mRNAs involved in cell proliferation. This chain is Eukaryotic translation initiation factor 3 subunit B, found in Yarrowia lipolytica (strain CLIB 122 / E 150) (Yeast).